The sequence spans 256 residues: Small ribosomal subunit protein uS2 (256 aa).

This sequence belongs to the universal ribosomal protein uS2 family.

The sequence is that of Small ribosomal subunit protein uS2 from Streptococcus agalactiae serotype Ia (strain ATCC 27591 / A909 / CDC SS700).